The chain runs to 282 residues: Pantothenate synthetase (282 aa).

30 to 37 (MGYLHEGH) contacts ATP. Catalysis depends on H37, which acts as the Proton donor. Q61 serves as a coordination point for (R)-pantoate. Position 61 (Q61) interacts with beta-alanine. Position 147–150 (147–150 (GQKD)) interacts with ATP. (R)-pantoate is bound at residue Q153. Residues V176 and 184–187 (MSSR) contribute to the ATP site.

The protein belongs to the pantothenate synthetase family. As to quaternary structure, homodimer.

It localises to the cytoplasm. It carries out the reaction (R)-pantoate + beta-alanine + ATP = (R)-pantothenate + AMP + diphosphate + H(+). The protein operates within cofactor biosynthesis; (R)-pantothenate biosynthesis; (R)-pantothenate from (R)-pantoate and beta-alanine: step 1/1. Catalyzes the condensation of pantoate with beta-alanine in an ATP-dependent reaction via a pantoyl-adenylate intermediate. The polypeptide is Pantothenate synthetase (Caldicellulosiruptor bescii (strain ATCC BAA-1888 / DSM 6725 / KCTC 15123 / Z-1320) (Anaerocellum thermophilum)).